A 639-amino-acid polypeptide reads, in one-letter code: Chaperone protein DnaK (639 aa).

Thr198 is subject to Phosphothreonine; by autocatalysis. The segment covering 603–618 (AKAQTQGGAQEGAAKQ) has biased composition (low complexity). The tract at residues 603–639 (AKAQTQGGAQEGAAKQSNATADDVVDAEFEEVKDDKK) is disordered. The segment covering 625 to 639 (DVVDAEFEEVKDDKK) has biased composition (acidic residues).

Belongs to the heat shock protein 70 family.

In terms of biological role, acts as a chaperone. This chain is Chaperone protein DnaK, found in Shewanella sp. (strain ANA-3).